Here is a 249-residue protein sequence, read N- to C-terminus: RNA polymerase sigma factor SigI3 (249 aa).

A Polymerase core binding motif is present at residues 60–73 (EEFSIGLAAFNEAI). Positions 199–218 (MKEVLSRIKVNHKTIQRNRK) form a DNA-binding region, H-T-H motif.

The protein belongs to the sigma-70 factor family. SigI subfamily. As to quaternary structure, interacts with RsgI3.

The protein localises to the cytoplasm. With respect to regulation, negatively regulated by the anti-sigma-I factor RsgI3. Binding of the polysaccharide substrate to RsgI3 may lead to the release and activation of SigI3. Its function is as follows. Sigma factors are initiation factors that promote the attachment of RNA polymerase to specific initiation sites and are then released. This sigma factor is involved in regulation of cellulosomal genes via an external polysaccharide-sensing mechanism. Recognizes the predicted promoters associated with sigI3 itself, pl11, ce12 and cipA. The chain is RNA polymerase sigma factor SigI3 from Acetivibrio thermocellus (strain ATCC 27405 / DSM 1237 / JCM 9322 / NBRC 103400 / NCIMB 10682 / NRRL B-4536 / VPI 7372) (Clostridium thermocellum).